The sequence spans 406 residues: Purine nucleoside permease (406 aa).

The N-terminal stretch at 1–22 (MKLSTLFTLATTISTLTTFTIA) is a signal peptide.

This sequence belongs to the NUP family. In terms of processing, predicted to be a substrate for cleavage by KEX2.

With respect to regulation, mammalian nucleoside transport inhibitors dipyridamole and NBMPR inhibit adenosine transport by NUP. Its function is as follows. Nucleoside permease that transports adenosine and guanosine. Does not show any transport activities towards cytidine, adenine, guanine, uridine, and uracil. This is Purine nucleoside permease from Candida albicans (strain SC5314 / ATCC MYA-2876) (Yeast).